We begin with the raw amino-acid sequence, 186 residues long: Translation initiation factor IF-3 (186 aa).

It belongs to the IF-3 family. Monomer.

The protein resides in the cytoplasm. Its function is as follows. IF-3 binds to the 30S ribosomal subunit and shifts the equilibrium between 70S ribosomes and their 50S and 30S subunits in favor of the free subunits, thus enhancing the availability of 30S subunits on which protein synthesis initiation begins. This is Translation initiation factor IF-3 from Chlamydia muridarum (strain MoPn / Nigg).